The chain runs to 557 residues: uncharacterized protein (557 aa).

Residues 2–45 adopt a coiled-coil conformation; it reads NEDETSILNKKMEKIEVEMAEFERLGAEREKEAVERIVQEENQN. Disordered stretches follow at residues 39 to 62, 101 to 127, 356 to 402, and 536 to 557; these read VQEE…KSRK, NRTY…RKNF, PSPS…YPSN, and ANAT…YDHI. Composition is skewed to polar residues over residues 101 to 110, 358 to 380, 390 to 400, and 536 to 548; these read NRTYYKNSQG, PSFQ…SSNA, DSATYPTSIYP, and ANAT…NLDT.

It is found in the cytoplasm. Its subcellular location is the nucleus. This is an uncharacterized protein from Schizosaccharomyces pombe (strain 972 / ATCC 24843) (Fission yeast).